Reading from the N-terminus, the 559-residue chain is Intestinal-type alkaline phosphatase (559 aa).

The signal sequence occupies residues 1–19; it reads MQGPWVLLLLGLRLQLSLS. Asp61 is a Mg(2+) binding site. Residues Asp61 and Ser111 each coordinate Zn(2+). The active-site Phosphoserine intermediate is Ser111. A disulfide bond links Cys140 and Cys202. Asn141 is a glycosylation site (N-linked (GlcNAc...) asparagine). Mg(2+) is bound at residue Ser174. Residue Glu235 coordinates Ca(2+). N-linked (GlcNAc...) asparagine glycosylation occurs at Asn241. Ca(2+) is bound by residues Phe288, Glu289, and Asp304. Glu330 lines the Mg(2+) pocket. Residues Asp335, His339, Asp376, and His377 each contribute to the Zn(2+) site. An N-linked (GlcNAc...) asparagine glycan is attached at Asn426. His450 provides a ligand contact to Zn(2+). Cys485 and Cys492 are joined by a disulfide. Residues 496–531 are disordered; it reads PPADESQTTTTTRQTTITTTTTTTTTTTTPVHNSAR. Positions 503 to 524 are enriched in low complexity; it reads TTTTTRQTTITTTTTTTTTTTT. The GPI-anchor amidated asparagine moiety is linked to residue Asn528. Positions 529-559 are cleaved as a propeptide — removed in mature form; sequence SARSLGPATAPLALALLAGMLMLLLGAPAES.

It belongs to the alkaline phosphatase family. Homodimer. Requires Mg(2+) as cofactor. It depends on Zn(2+) as a cofactor. Ca(2+) serves as cofactor. As to expression, intestine and thymus.

It localises to the cell membrane. The enzyme catalyses a phosphate monoester + H2O = an alcohol + phosphate. In terms of biological role, alkaline phosphatase that can hydrolyze various phosphate compounds. The polypeptide is Intestinal-type alkaline phosphatase (Iap) (Mus musculus (Mouse)).